A 153-amino-acid polypeptide reads, in one-letter code: Pheromone-binding protein Gp-9 (153 aa).

A signal peptide spans 1–19 (MKTFVLHIFIFALVAFASA). Disulfide bonds link cysteine 37/cysteine 77, cysteine 73/cysteine 129, and cysteine 118/cysteine 138.

It belongs to the PBP/GOBP family. As to quaternary structure, homodimer.

The protein resides in the secreted. Colony queen number, a major feature of social organization, is associated with worker genotype for Gp-9. Colonies are headed by either a single reproductive queen (monogyne form) or multiple queens (polygyne form). Differences in worker Gp-9 genotypes between social forms may cause differences in workers' abilities to recognize queens and regulate their numbers. The sequence is that of Pheromone-binding protein Gp-9 from Solenopsis electra (Fire ant).